A 357-amino-acid chain; its full sequence is Cobalt-precorrin-5B C(1)-methyltransferase (357 aa).

Belongs to the CbiD family.

It carries out the reaction Co-precorrin-5B + S-adenosyl-L-methionine = Co-precorrin-6A + S-adenosyl-L-homocysteine. It functions in the pathway cofactor biosynthesis; adenosylcobalamin biosynthesis; cob(II)yrinate a,c-diamide from sirohydrochlorin (anaerobic route): step 6/10. Catalyzes the methylation of C-1 in cobalt-precorrin-5B to form cobalt-precorrin-6A. This Alkaliphilus oremlandii (strain OhILAs) (Clostridium oremlandii (strain OhILAs)) protein is Cobalt-precorrin-5B C(1)-methyltransferase.